Here is a 314-residue protein sequence, read N- to C-terminus: Torsin-2A (314 aa).

Residues 1 to 19 form the signal peptide; it reads MAVRWWIIPMLLLVPGSSG. 86-93 contacts ATP; it reads GWSGTGKT. 2 N-linked (GlcNAc...) asparagine glycosylation sites follow: asparagine 142 and asparagine 283.

Belongs to the ClpA/ClpB family. Torsin subfamily. In terms of assembly, homohexamer.

It localises to the endoplasmic reticulum lumen. The protein is Torsin-2A (tor2a) of Xenopus laevis (African clawed frog).